The following is a 990-amino-acid chain: Presequence protease, mitochondrial (990 aa).

The N-terminal 25 residues, 1 to 25 (MLRLKSLKKPVQAVVRRFATTSAPT), are a transit peptide targeting the mitochondrion. Histidine 89 contacts Zn(2+). The Proton acceptor role is filled by glutamate 92. Histidine 93 is a Zn(2+) binding site. Residue glutamate 165 is part of the active site. Glutamate 190 is a binding site for Zn(2+).

This sequence belongs to the peptidase M16 family. PreP subfamily. As to quaternary structure, monomer and homodimer; homodimerization is induced by binding of the substrate. The cofactor is Zn(2+).

It is found in the mitochondrion intermembrane space. The protein resides in the mitochondrion matrix. Functionally, degrades mitochondrial transit peptides after their cleavage in the intermembrane space or in the matrix, and presequence peptides; clearance of these peptides is required to keep the presequence processing machinery running. Preferentially cleaves the N-terminal side of paired basic amino acid residues. Also degrades other unstructured peptides. May function as an ATP-dependent peptidase as opposed to a metalloendopeptidase. This is Presequence protease, mitochondrial (CYM1) from Yarrowia lipolytica (strain CLIB 122 / E 150) (Yeast).